A 331-amino-acid chain; its full sequence is UPF0194 membrane protein YbhG (331 aa).

The N-terminal stretch at 1 to 19 (MKKPVVIGLAIAAIVAVIA) is a signal peptide. Residues 107–208 (EEIAQAAAAV…LDLQDTTLIA (102 aa)) are a coiled coil.

Belongs to the UPF0194 family.

It is found in the periplasm. The sequence is that of UPF0194 membrane protein YbhG from Salmonella paratyphi A (strain ATCC 9150 / SARB42).